A 443-amino-acid chain; its full sequence is Protoheme IX farnesyltransferase, mitochondrial (443 aa).

The interval 68-113 is disordered; the sequence is LSQRVKPKPEPPASPFLEHTSSGQARADEDELPSFPAPSRPLSRKP. Transmembrane regions (helical) follow at residues 174-194, 230-250, 252-272, 286-306, 308-328, 363-383, and 410-430; these read AGFALAPGPFDWSCFLLTSLG, ISPLLAVSFATCCAVPGVALL, WGVNPLTGALGVFNIFLYTCC, VGAVVGAIPPVMGWTAATGSL, AGALLLGGILYSWQFPHFNAL, LIALSTAAPVLDITTWVFPVI, and LFFCSLWHLPLLLLLMLTCKQ.

It belongs to the UbiA prenyltransferase family.

Its subcellular location is the mitochondrion membrane. It carries out the reaction heme b + (2E,6E)-farnesyl diphosphate + H2O = Fe(II)-heme o + diphosphate. Converts protoheme IX and farnesyl diphosphate to heme O. This Mus musculus (Mouse) protein is Protoheme IX farnesyltransferase, mitochondrial (Cox10).